The primary structure comprises 222 residues: Phosphoribosylformylglycinamidine synthase subunit PurQ (222 aa).

The Glutamine amidotransferase type-1 domain occupies Lys2–Val222. Residue Cys86 is the Nucleophile of the active site. Active-site residues include His194 and Glu196.

In terms of assembly, part of the FGAM synthase complex composed of 1 PurL, 1 PurQ and 2 PurS subunits.

The protein localises to the cytoplasm. The catalysed reaction is N(2)-formyl-N(1)-(5-phospho-beta-D-ribosyl)glycinamide + L-glutamine + ATP + H2O = 2-formamido-N(1)-(5-O-phospho-beta-D-ribosyl)acetamidine + L-glutamate + ADP + phosphate + H(+). The enzyme catalyses L-glutamine + H2O = L-glutamate + NH4(+). The protein operates within purine metabolism; IMP biosynthesis via de novo pathway; 5-amino-1-(5-phospho-D-ribosyl)imidazole from N(2)-formyl-N(1)-(5-phospho-D-ribosyl)glycinamide: step 1/2. Its function is as follows. Part of the phosphoribosylformylglycinamidine synthase complex involved in the purines biosynthetic pathway. Catalyzes the ATP-dependent conversion of formylglycinamide ribonucleotide (FGAR) and glutamine to yield formylglycinamidine ribonucleotide (FGAM) and glutamate. The FGAM synthase complex is composed of three subunits. PurQ produces an ammonia molecule by converting glutamine to glutamate. PurL transfers the ammonia molecule to FGAR to form FGAM in an ATP-dependent manner. PurS interacts with PurQ and PurL and is thought to assist in the transfer of the ammonia molecule from PurQ to PurL. This Cereibacter sphaeroides (strain ATCC 17023 / DSM 158 / JCM 6121 / CCUG 31486 / LMG 2827 / NBRC 12203 / NCIMB 8253 / ATH 2.4.1.) (Rhodobacter sphaeroides) protein is Phosphoribosylformylglycinamidine synthase subunit PurQ.